Reading from the N-terminus, the 720-residue chain is DNA ligase (720 aa).

NAD(+) is bound by residues 57–61 (DAEYD), 106–107 (SL), and glutamate 140. Lysine 142 functions as the N6-AMP-lysine intermediate in the catalytic mechanism. NAD(+) is bound by residues arginine 163, glutamate 200, lysine 316, and lysine 340. Positions 434, 437, 458, and 464 each coordinate Zn(2+). Positions 643–720 (AAASPVSGKT…TEDEWFELVG (78 aa)) constitute a BRCT domain.

It belongs to the NAD-dependent DNA ligase family. LigA subfamily. Mg(2+) serves as cofactor. It depends on Mn(2+) as a cofactor.

It catalyses the reaction NAD(+) + (deoxyribonucleotide)n-3'-hydroxyl + 5'-phospho-(deoxyribonucleotide)m = (deoxyribonucleotide)n+m + AMP + beta-nicotinamide D-nucleotide.. DNA ligase that catalyzes the formation of phosphodiester linkages between 5'-phosphoryl and 3'-hydroxyl groups in double-stranded DNA using NAD as a coenzyme and as the energy source for the reaction. It is essential for DNA replication and repair of damaged DNA. The chain is DNA ligase from Xanthobacter autotrophicus (strain ATCC BAA-1158 / Py2).